Consider the following 503-residue polypeptide: WAS/WASL-interacting protein family member 1 (503 aa).

Residues 1 to 14 are compositionally biased toward pro residues; the sequence is MPVPPPPAPPPPPT. Positions 1–503 are disordered; sequence MPVPPPPAPP…GAPPLPPIPR (503 aa). The span at 21-31 shows a compositional bias: polar residues; it reads EKPTLNKTEQA. Residues 32-49 form the WH2 domain; the sequence is GRNALLSDISKGKKLKKT. The residue at position 33 (arginine 33) is an Asymmetric dimethylarginine. Positions 45–48 are binds actin; it reads KLKK. Gly residues predominate over residues 65-104; it reads AGAGGGGGGFGGGGGFGGGGGGGGGGSFGGGGPPGLGGLF. The span at 121 to 137 shows a compositional bias: low complexity; the sequence is SGGSRPPLLPPGGRSTS. Omega-N-methylarginine occurs at positions 125 and 134. 4 stretches are compositionally biased toward pro residues: residues 141–154, 161–174, 182–191, and 204–223; these read FSPPSGPGRFPVPS, PPEPQRNRMPPPRP, SIPPPVPSTP, and PPVPGGPRQPSPGPTPPPFP. Serine 142 carries the post-translational modification Phosphoserine. Serine 234 bears the Phosphoserine mark. The span at 238 to 247 shows a compositional bias: low complexity; the sequence is SPLSSSSPFS. 2 stretches are compositionally biased toward pro residues: residues 282–298 and 306–323; these read VPPPPPQNNKPPVPSTP and APPPPPPPSRPGPPPLPP. At serine 340 the chain carries Phosphoserine. Threonine 345 carries the phosphothreonine modification. The segment covering 346-371 has biased composition (pro residues); it reads PPLPSPGRSGPLPPPPSERPPPPVRD. Position 350 is a phosphoserine (serine 350). XRSGPXPPXP motif repeat units follow at residues 352–361, 374–383, and 410–419; these read GRSGPLPPPP and PRSGPRPPLP. Residues 413 to 434 show a composition bias toward pro residues; it reads GPRPPLPPDRPSAGAPPPPPPS. Over residues 480–494 the composition is skewed to basic and acidic residues; that stretch reads ARNESRSGSNRRERG.

This sequence belongs to the verprolin family. As to quaternary structure, binds to WAS, profilin and actin. Binds to WASL. Interacts with DBNL. Interacts with FNBP1L (via the SH3 domain). In terms of tissue distribution, highly expressed in peripheral blood mononuclear cells, spleen, placenta, small intestine, colon and thymus. Lower expression in ovary, heart, brain, lung, liver, skeletal muscle, kidney, pancreas, prostate and testis.

It localises to the cytoplasmic vesicle. It is found in the cytoplasm. The protein resides in the cytoskeleton. Its subcellular location is the cell projection. The protein localises to the ruffle. Plays a role in the reorganization of the actin cytoskeleton. Contributes with NCK1 and GRB2 in the recruitment and activation of WASL. May participate in regulating the subcellular localization of WASL, resulting in the disassembly of stress fibers in favor of filopodia formation. Plays a role in the formation of cell ruffles. Plays an important role in the intracellular motility of vaccinia virus by functioning as an adapter for recruiting WASL to vaccinia virus. The sequence is that of WAS/WASL-interacting protein family member 1 (WIPF1) from Homo sapiens (Human).